Consider the following 72-residue polypeptide: Translation initiation factor IF-1 (72 aa).

The 72-residue stretch at Met-1 to Arg-72 folds into the S1-like domain.

This sequence belongs to the IF-1 family. Component of the 30S ribosomal translation pre-initiation complex which assembles on the 30S ribosome in the order IF-2 and IF-3, IF-1 and N-formylmethionyl-tRNA(fMet); mRNA recruitment can occur at any time during PIC assembly.

It is found in the cytoplasm. Its function is as follows. One of the essential components for the initiation of protein synthesis. Stabilizes the binding of IF-2 and IF-3 on the 30S subunit to which N-formylmethionyl-tRNA(fMet) subsequently binds. Helps modulate mRNA selection, yielding the 30S pre-initiation complex (PIC). Upon addition of the 50S ribosomal subunit IF-1, IF-2 and IF-3 are released leaving the mature 70S translation initiation complex. The protein is Translation initiation factor IF-1 of Saccharophagus degradans (strain 2-40 / ATCC 43961 / DSM 17024).